A 361-amino-acid polypeptide reads, in one-letter code: Alternative oxidase, mitochondrial (361 aa).

A helical transmembrane segment spans residues 156–178; that stretch reads YLVRNVFLESVAGVPGMVAGMLR. Glu164, Glu203, and His206 together coordinate Fe cation. Residues 218 to 240 traverse the membrane as a helical segment; that stretch reads WFMRLAVLGAQGVFFNAMFLSYL. Glu254, Glu309, and His312 together coordinate Fe cation. Residues 318–328 show a composition bias toward polar residues; the sequence is TLGNLDQNSDP. Residues 318–361 form a disordered region; the sequence is TLGNLDQNSDPNPYASKYDNPNVPHPRKDIKYLKPSGWEREEVM. The span at 343–361 shows a compositional bias: basic and acidic residues; sequence PRKDIKYLKPSGWEREEVM.

This sequence belongs to the alternative oxidase family. Fe cation serves as cofactor.

Its subcellular location is the mitochondrion inner membrane. In terms of biological role, catalyzes cyanide-resistant oxygen consumption. May increase respiration when the cytochrome respiratory pathway is restricted, or in response to low temperatures. In Venturia inaequalis (Apple scab fungus), this protein is Alternative oxidase, mitochondrial (AOX1).